Reading from the N-terminus, the 313-residue chain is E3 ubiquitin-protein ligase SINA-like 2 (313 aa).

Residues 1–26 (MSGEASTSRRKRQRVPSSVESVENGG) form a disordered region. Residues 44–80 (CPICCHALTSPIFQCDNGHIACSSCCTKLRNKCPSCA) form an RING-type zinc finger. The interval 94–277 (VVEAVMVTCP…LKMEICIRKL (184 aa)) is SBD. The SIAH-type zinc finger occupies 97-155 (AVMVTCPNVKHGCTEKFSYGKELIHEKDCRFALCYCPAPNCNYSGVYKDLYSHFYVNHY). Residues Cys102, Cys109, His121, Cys125, Cys132, Cys137, His149, and His154 each contribute to the Zn(2+) site. The tract at residues 278–313 (KKDEEEADEDEESEEEEDDDDDDDDDDEEEDADEEE) is disordered. The span at 282 to 313 (EEADEDEESEEEEDDDDDDDDDDEEEDADEEE) shows a compositional bias: acidic residues.

Belongs to the SINA (Seven in absentia) family.

It catalyses the reaction S-ubiquitinyl-[E2 ubiquitin-conjugating enzyme]-L-cysteine + [acceptor protein]-L-lysine = [E2 ubiquitin-conjugating enzyme]-L-cysteine + N(6)-ubiquitinyl-[acceptor protein]-L-lysine.. It participates in protein modification; protein ubiquitination. Its function is as follows. E3 ubiquitin-protein ligase that mediates ubiquitination and subsequent proteasomal degradation of target proteins. E3 ubiquitin ligases accept ubiquitin from an E2 ubiquitin-conjugating enzyme in the form of a thioester and then directly transfers the ubiquitin to targeted substrates. It probably triggers the ubiquitin-mediated degradation of different substrates. The protein is E3 ubiquitin-protein ligase SINA-like 2 of Arabidopsis thaliana (Mouse-ear cress).